A 494-amino-acid polypeptide reads, in one-letter code: UPF0371 protein SPy_1343/M5005_Spy1095 (494 aa).

This sequence belongs to the UPF0371 family.

This is UPF0371 protein SPy_1343/M5005_Spy1095 from Streptococcus pyogenes serotype M1.